We begin with the raw amino-acid sequence, 264 residues long: MKSKLKLHGFNNLTKTLSFNIYDICYAETPEDLQAYVQYIDEEYDAERLTQILTDVVDIIGANILNIARQDYDPQGASVTILISEQPVTPTDSQIEESPGPLPDTILAHLDKSHITVHTYPEIHPVDGIATFRVDIDVSTCGVISPLKALNYLIHQFDSDIVTVDYRVRGFTRDIEGRKHFIDHEINSIQNYLSDDTREAYQMTDVNVYQENLFHTKMLLKDFELENYLFGDATRNLSAEQREQVTERLRHEMLEIFYARNMPH.

S113 serves as the catalytic Schiff-base intermediate with substrate; via pyruvic acid. S113 carries the post-translational modification Pyruvic acid (Ser); by autocatalysis. The active-site Proton acceptor; for processing activity is the H118. The Proton donor; for catalytic activity role is filled by C141.

Belongs to the prokaryotic AdoMetDC family. Type 2 subfamily. Heterooctamer of four alpha and four beta chains arranged as a tetramer of alpha/beta heterodimers. It depends on pyruvate as a cofactor. In terms of processing, is synthesized initially as an inactive proenzyme. Formation of the active enzyme involves a self-maturation process in which the active site pyruvoyl group is generated from an internal serine residue via an autocatalytic post-translational modification. Two non-identical subunits are generated from the proenzyme in this reaction, and the pyruvate is formed at the N-terminus of the alpha chain, which is derived from the carboxyl end of the proenzyme. The post-translation cleavage follows an unusual pathway, termed non-hydrolytic serinolysis, in which the side chain hydroxyl group of the serine supplies its oxygen atom to form the C-terminus of the beta chain, while the remainder of the serine residue undergoes an oxidative deamination to produce ammonia and the pyruvoyl group blocking the N-terminus of the alpha chain.

The catalysed reaction is S-adenosyl-L-methionine + H(+) = S-adenosyl 3-(methylsulfanyl)propylamine + CO2. The protein operates within amine and polyamine biosynthesis; S-adenosylmethioninamine biosynthesis; S-adenosylmethioninamine from S-adenosyl-L-methionine: step 1/1. Catalyzes the decarboxylation of S-adenosylmethionine to S-adenosylmethioninamine (dcAdoMet), the propylamine donor required for the synthesis of the polyamines spermine and spermidine from the diamine putrescine. The chain is S-adenosylmethionine decarboxylase proenzyme from Pseudomonas paraeruginosa (strain DSM 24068 / PA7) (Pseudomonas aeruginosa (strain PA7)).